The chain runs to 274 residues: 3-methyl-2-oxobutanoate hydroxymethyltransferase (274 aa).

Mg(2+)-binding residues include Asp-49 and Asp-88. Residues 49 to 50 (DS), Asp-88, and Lys-118 each bind 3-methyl-2-oxobutanoate. Position 120 (Glu-120) interacts with Mg(2+). Glu-187 serves as the catalytic Proton acceptor.

The protein belongs to the PanB family. In terms of assembly, homodecamer; pentamer of dimers. It depends on Mg(2+) as a cofactor.

It is found in the cytoplasm. The catalysed reaction is 3-methyl-2-oxobutanoate + (6R)-5,10-methylene-5,6,7,8-tetrahydrofolate + H2O = 2-dehydropantoate + (6S)-5,6,7,8-tetrahydrofolate. It participates in cofactor biosynthesis; (R)-pantothenate biosynthesis; (R)-pantoate from 3-methyl-2-oxobutanoate: step 1/2. Functionally, catalyzes the reversible reaction in which hydroxymethyl group from 5,10-methylenetetrahydrofolate is transferred onto alpha-ketoisovalerate to form ketopantoate. The sequence is that of 3-methyl-2-oxobutanoate hydroxymethyltransferase from Rhodopseudomonas palustris (strain BisB5).